A 94-amino-acid polypeptide reads, in one-letter code: Small ribosomal subunit protein uS19c (94 aa).

This sequence belongs to the universal ribosomal protein uS19 family.

It is found in the plastid. It localises to the chloroplast. Protein S19 forms a complex with S13 that binds strongly to the 16S ribosomal RNA. The chain is Small ribosomal subunit protein uS19c from Pleurastrum terricola (Filamentous green alga).